Reading from the N-terminus, the 174-residue chain is Nucleoside-triphosphatase THEP1 (174 aa).

Residues 15–22 (GMPGVGKT) and 102–109 (LAIVDEIG) contribute to the ATP site.

This sequence belongs to the THEP1 NTPase family.

It catalyses the reaction a ribonucleoside 5'-triphosphate + H2O = a ribonucleoside 5'-diphosphate + phosphate + H(+). Has nucleotide phosphatase activity towards ATP, GTP, CTP, TTP and UTP. May hydrolyze nucleoside diphosphates with lower efficiency. This Pyrobaculum islandicum (strain DSM 4184 / JCM 9189 / GEO3) protein is Nucleoside-triphosphatase THEP1.